A 179-amino-acid polypeptide reads, in one-letter code: Centromere protein R (179 aa).

The disordered stretch occupies residues 1–79; that stretch reads MSAKRSLKLD…RLSRRGQPQT (79 aa). Residues 30-50 show a composition bias toward polar residues; the sequence is NSYSPTTGTCQISPFSSPTSH. A compositionally biased stretch (basic and acidic residues) spans 51 to 64; the sequence is NAEDLRNGLSHGDE. Residues 172–176 carry the LXXLL motif motif; the sequence is LQLLL.

The protein resides in the nucleus. Its subcellular location is the chromosome. It is found in the centromere. The protein localises to the kinetochore. Transcription coregulator that can have both coactivator and corepressor functions. Involved in the coactivation of nuclear receptors for retinoid X (RXRs) and thyroid hormone (TRs) in a ligand-dependent fashion. Probable component of a centromeric complex involved in assembly of kinetochore proteins, mitotic progression and chromosome segregation. The protein is Centromere protein R (CENPR) of Gallus gallus (Chicken).